The chain runs to 290 residues: Arginine N-acetyltransferase avaD (290 aa).

157–163 (NQAHFEA) contacts acetyl-CoA.

The protein belongs to the acetyltransferase family. GCN5 subfamily.

Its pathway is secondary metabolite metabolism. In terms of biological role, arginine N-acetyltransferase; part of the cluster that mediates the biosynthesis of a highly modified cyclo-arginine-tryptophan dipeptide (cRW). Within the pathway, avaD catalyzes the N-acetylation of the guanidine group. The first step of the pathway is perfornmed by the arginine-containing cyclodipeptide synthase (RCPDS) avaA that acts as the scaffold-generating enzyme and is responsible for formation of the cyclo-Arg-Trp (cRW) diketopiperazine. AvaB then acts as a multifunctional flavoenzyme that is responsible for generating the cyclo-Arg-formylkynurenine DKP, which can be deformylated by avaC. AvaB then further catalyzes an additional N-oxidation followed by cyclization and dehydration. The next step is an N-acetylation of the guanidine group catalyzed by the arginine N-acetyltransferase avaD. The roles of the additional enzymes identified within the ava cluster still have to be determined. This is Arginine N-acetyltransferase avaD from Aspergillus versicolor.